Here is a 612-residue protein sequence, read N- to C-terminus: Protein tipD (612 aa).

Positions 95–128 are disordered; that stretch reads RNEKKTQQQPPSGSSKMDSSSSSSSSNRVSGMGS. Over residues 106 to 128 the composition is skewed to low complexity; that stretch reads SGSSKMDSSSSSSSSNRVSGMGS. WD repeat units follow at residues 322–361, 364–403, 406–444, 447–486, 490–530, 535–576, and 582–611; these read GHNS…QKST, GASQ…SRHT, GHIG…CTRT, CFSS…PTQV, IHEG…TIRT, EYRN…TVKV, and NNGS…IIQW.

It belongs to the WD repeat tipD family.

Functionally, not known; disruption of the gene for tipD results in morphological defects. This chain is Protein tipD (tipD), found in Dictyostelium discoideum (Social amoeba).